The sequence spans 3085 residues: Genome polyprotein (3085 aa).

Residues 170–313 (LVAKSDFDDL…AGDVGRTMHY (144 aa)) enclose the Peptidase S30 domain. Catalysis depends on for P1 proteinase activity residues H224, E233, and S266. The Involved in interaction with stylet and aphid transmission motif lies at 365 to 368 (KMAC). The short motif at 622-624 (PTK) is the Involved in virions binding and aphid transmission element. Residues 648-770 (MYIAKEGYCY…EGEMKWYRVG (123 aa)) form the Peptidase C6 domain. Catalysis depends on for helper component proteinase activity residues C656 and H729. The region spanning 1241 to 1393 (TICASSEQEF…TQHDVLIKIE (153 aa)) is the Helicase ATP-binding domain. 1254–1261 (GAVGSGKS) is a binding site for ATP. The DESH box motif lies at 1343–1346 (DESH). One can recognise a Helicase C-terminal domain in the interval 1412 to 1571 (DVVQNGDNIL…NLPVMTHNVT (160 aa)). The short motif at 1895–1904 (ERGKRKGNNS) is the Nuclear localization signal element. Y1919 carries the post-translational modification O-(5'-phospho-RNA)-tyrosine. A Peptidase C4 domain is found at 2047–2266 (GKSIVKGLRN…VAWNGMTLRE (220 aa)). Active-site for nuclear inclusion protein A activity residues include H2092, D2127, and C2198. The region spanning 2535–2659 (WIYCDADGSQ…AIYPSKEKFL (125 aa)) is the RdRp catalytic domain. Residues 2801-2869 (DGPDIVTYQG…STAVPRLKQI (69 aa)) form a disordered region. Residues 2816 to 2831 (KSSQPQSSSPQVPQQV) are compositionally biased toward low complexity. Over residues 2839-2855 (GRDKQSVIKHDSTKSKD) the composition is skewed to basic and acidic residues. T3068 bears the Phosphothreonine mark.

It belongs to the potyviridae genome polyprotein family. As to quaternary structure, interacts with host eIF4E protein (via cap-binding region); this interaction mediates the translation of the VPg-viral RNA conjugates. Part of a complex that comprises VPg, RNA, host EIF4E and EIF4G; this interaction mediates the translation of the VPg-viral RNA conjugates. In terms of processing, VPg is uridylylated by the polymerase and is covalently attached to the 5'-end of the genomic RNA. This uridylylated form acts as a nucleotide-peptide primer for the polymerase. Potyviral RNA is expressed as two polyproteins which undergo post-translational proteolytic processing. Genome polyprotein is processed by NIa-pro, P1 and HC-pro proteinases resulting in the production of at least ten individual proteins. P3N-PIPO polyprotein is cleaved by P1 and HC-pro proteinases resulting in the production of three individual proteins. The P1 proteinase and the HC-pro cleave only their respective C-termini autocatalytically. 6K1 is essential for proper proteolytic separation of P3 from CI.

It localises to the host cytoplasmic vesicle. It is found in the host nucleus. The protein localises to the virion. The enzyme catalyses RNA(n) + a ribonucleoside 5'-triphosphate = RNA(n+1) + diphosphate. It carries out the reaction Hydrolyzes glutaminyl bonds, and activity is further restricted by preferences for the amino acids in P6 - P1' that vary with the species of potyvirus, e.g. Glu-Xaa-Xaa-Tyr-Xaa-Gln-|-(Ser or Gly) for the enzyme from tobacco etch virus. The natural substrate is the viral polyprotein, but other proteins and oligopeptides containing the appropriate consensus sequence are also cleaved.. It catalyses the reaction Hydrolyzes a Gly-|-Gly bond at its own C-terminus, commonly in the sequence -Tyr-Xaa-Val-Gly-|-Gly, in the processing of the potyviral polyprotein.. Its function is as follows. Required for aphid transmission and also has proteolytic activity. Only cleaves a Gly-Gly dipeptide at its own C-terminus. Interacts with virions and aphid stylets. Acts as a suppressor of RNA-mediated gene silencing, also known as post-transcriptional gene silencing (PTGS), a mechanism of plant viral defense that limits the accumulation of viral RNAs. May have RNA-binding activity. Functionally, has helicase activity. It may be involved in replication. Indispensable for virus replication. Reduces the abundance of host transcripts related to jasmonic acid biosynthesis therefore altering the host defenses. In order to increase its own stability, decreases host protein degradation pathways. In terms of biological role, indispensable for virus replication. Its function is as follows. Mediates the cap-independent, EIF4E-dependent translation of viral genomic RNAs. Binds to the cap-binding site of host EIF4E and thus interferes with the host EIF4E-dependent mRNA export and translation. VPg-RNA directly binds EIF4E and is a template for transcription. Also forms trimeric complexes with EIF4E-EIF4G, which are templates for translation. Functionally, has RNA-binding and proteolytic activities. An RNA-dependent RNA polymerase that plays an essential role in the virus replication. In terms of biological role, involved in aphid transmission, cell-to-cell and systemis movement, encapsidation of the viral RNA and in the regulation of viral RNA amplification. The sequence is that of Genome polyprotein from Beet mosaic virus (BtMV).